Consider the following 304-residue polypeptide: Non-specific ribonucleoside hydrolase RihC (304 aa).

The active site involves H233.

This sequence belongs to the IUNH family. RihC subfamily.

In terms of biological role, hydrolyzes both purine and pyrimidine ribonucleosides with a broad-substrate specificity. This Escherichia coli O157:H7 protein is Non-specific ribonucleoside hydrolase RihC.